A 55-amino-acid polypeptide reads, in one-letter code: Methylmalonyl-CoA decarboxylase subunit epsilon (55 aa).

The methylmalonyl-CoA decarboxylase is composed of five subunits: the carboxyltransferase alpha subunit (MmdA), the tunnel beta subunit (MmdB), the biotin-containing gamma subunit (MmdC), and the delta (MmdD) and epsilon (MmdE) subunits.

Its subcellular location is the cell membrane. It catalyses the reaction (S)-methylmalonyl-CoA + Na(+)(in) + H(+)(out) = propanoyl-CoA + Na(+)(out) + CO2. Completely inhibited by avidin. In terms of biological role, subunit of the sodium ion pump methylmalonyl-CoA decarboxylase, which converts the chemical energy of a decarboxylation reaction into an electrochemical gradient of Na(+) ions across the cytoplasmic membrane, thereby creating a sodium ion motive force that is used for ATP synthesis. The epsilon subunit seems not important for the catalysis of either decarboxylation or Na(+) transport, but it improves binding of the alpha subunit and plays an important role in stabilizing the methylmalonyl-CoA-decarboxylase enzyme complex. Can also convert malonyl-CoA into acetyl-CoA. In Veillonella parvula (Staphylococcus parvulus), this protein is Methylmalonyl-CoA decarboxylase subunit epsilon.